Reading from the N-terminus, the 76-residue chain is Translational regulator CsrA (76 aa).

This sequence belongs to the CsrA/RsmA family. Homodimer; the beta-strands of each monomer intercalate to form a hydrophobic core, while the alpha-helices form wings that extend away from the core.

The protein localises to the cytoplasm. A translational regulator that binds mRNA to regulate translation initiation and/or mRNA stability. Usually binds in the 5'-UTR at or near the Shine-Dalgarno sequence preventing ribosome-binding, thus repressing translation. Its main target seems to be the major flagellin gene, while its function is anatagonized by FliW. The protein is Translational regulator CsrA of Wolinella succinogenes (strain ATCC 29543 / DSM 1740 / CCUG 13145 / JCM 31913 / LMG 7466 / NCTC 11488 / FDC 602W) (Vibrio succinogenes).